The sequence spans 265 residues: Energy-coupling factor transporter ATP-binding protein EcfA1 (265 aa).

The ABC transporter domain maps to 2–236 (IKIKNLVFRY…KEIVELAKID (235 aa)). 36–43 (GHNGSGKS) contacts ATP.

It belongs to the ABC transporter superfamily. Energy-coupling factor EcfA family. As to quaternary structure, forms a stable energy-coupling factor (ECF) transporter complex composed of 2 membrane-embedded substrate-binding proteins (S component), 2 ATP-binding proteins (A component) and 2 transmembrane proteins (T component).

The protein resides in the cell membrane. In terms of biological role, ATP-binding (A) component of a common energy-coupling factor (ECF) ABC-transporter complex. Unlike classic ABC transporters this ECF transporter provides the energy necessary to transport a number of different substrates. This is Energy-coupling factor transporter ATP-binding protein EcfA1 from Mycoplasmopsis pulmonis (strain UAB CTIP) (Mycoplasma pulmonis).